A 491-amino-acid polypeptide reads, in one-letter code: Chromosomal replication initiator protein DnaA (491 aa).

Residues 1–68 (MTSIWGQIQH…RTAACGVIGD (68 aa)) form a domain I, interacts with DnaA modulators region. Residues 68–146 (DTVEVVVTAG…PLDWAPVPQS (79 aa)) form a domain II region. The segment at 147 to 364 (RTNWRFSFDD…SCLHNLILKA (218 aa)) is domain III, AAA+ region. The ATP site is built by G190, G192, K193, and T194. The domain IV, binds dsDNA stretch occupies residues 365-491 (KLLNRQISLE…RNGRITHARH (127 aa)).

The protein belongs to the DnaA family. As to quaternary structure, oligomerizes as a right-handed, spiral filament on DNA at oriC.

It localises to the cytoplasm. Plays an essential role in the initiation and regulation of chromosomal replication. ATP-DnaA binds to the origin of replication (oriC) to initiate formation of the DNA replication initiation complex once per cell cycle. Binds the DnaA box (a 9 base pair repeat at the origin) and separates the double-stranded (ds)DNA. Forms a right-handed helical filament on oriC DNA; dsDNA binds to the exterior of the filament while single-stranded (ss)DNA is stabiized in the filament's interior. The ATP-DnaA-oriC complex binds and stabilizes one strand of the AT-rich DNA unwinding element (DUE), permitting loading of DNA polymerase. After initiation quickly degrades to an ADP-DnaA complex that is not apt for DNA replication. Binds acidic phospholipids. This chain is Chromosomal replication initiator protein DnaA, found in Nitratidesulfovibrio vulgaris (strain ATCC 29579 / DSM 644 / CCUG 34227 / NCIMB 8303 / VKM B-1760 / Hildenborough) (Desulfovibrio vulgaris).